A 470-amino-acid chain; its full sequence is 6-phospho-beta-galactosidase (470 aa).

Glutamine 19, histidine 116, asparagine 159, glutamate 160, and asparagine 297 together coordinate D-galactose 6-phosphate. The active-site Proton donor is the glutamate 160. Glutamate 375 acts as the Nucleophile in catalysis. D-galactose 6-phosphate contacts are provided by serine 430, tryptophan 431, lysine 437, and tyrosine 439.

Belongs to the glycosyl hydrolase 1 family.

The catalysed reaction is a 6-phospho-beta-D-galactoside + H2O = D-galactose 6-phosphate + an alcohol. It participates in carbohydrate metabolism; lactose degradation; D-galactose 6-phosphate and beta-D-glucose from lactose 6-phosphate: step 1/1. In Staphylococcus aureus (strain COL), this protein is 6-phospho-beta-galactosidase.